The sequence spans 177 residues: Transcription antitermination protein NusB (177 aa).

The interval 1–35 (MTDSTHPTPSARPPRQPRTGTTGTGARKAGSKSGR) is disordered. The segment covering 17-28 (PRTGTTGTGARK) has biased composition (low complexity).

This sequence belongs to the NusB family.

Functionally, involved in transcription antitermination. Required for transcription of ribosomal RNA (rRNA) genes. Binds specifically to the boxA antiterminator sequence of the ribosomal RNA (rrn) operons. The chain is Transcription antitermination protein NusB from Acidovorax sp. (strain JS42).